The following is a 171-amino-acid chain: uncharacterized protein (171 aa).

The region spanning 33 to 166 (AISIATNLYR…LTGLLRKVAD (134 aa)) is the HTH marR-type domain. A DNA-binding region (H-T-H motif) is located at residues 80–103 (TRKIAELSGISTATASNVIKTLEK).

This is an uncharacterized protein from Bacillus subtilis (strain 168).